The primary structure comprises 378 residues: Beta sliding clamp (378 aa).

Belongs to the beta sliding clamp family. In terms of assembly, forms a ring-shaped head-to-tail homodimer around DNA which binds and tethers DNA polymerases and other proteins to the DNA. The DNA replisome complex has a single clamp-loading complex (3 tau and 1 each of delta, delta', psi and chi subunits) which binds 3 Pol III cores (1 core on the leading strand and 2 on the lagging strand) each with a beta sliding clamp dimer. Additional proteins in the replisome are other copies of gamma, psi and chi, Ssb, DNA helicase and RNA primase.

It is found in the cytoplasm. Its function is as follows. Confers DNA tethering and processivity to DNA polymerases and other proteins. Acts as a clamp, forming a ring around DNA (a reaction catalyzed by the clamp-loading complex) which diffuses in an ATP-independent manner freely and bidirectionally along dsDNA. Initially characterized for its ability to contact the catalytic subunit of DNA polymerase III (Pol III), a complex, multichain enzyme responsible for most of the replicative synthesis in bacteria; Pol III exhibits 3'-5' exonuclease proofreading activity. The beta chain is required for initiation of replication as well as for processivity of DNA replication. This Streptococcus pneumoniae serotype 4 (strain ATCC BAA-334 / TIGR4) protein is Beta sliding clamp (dnaN).